The sequence spans 120 residues: Large ribosomal subunit protein P3y (120 aa).

Over residues 81–92 (GGAAAGGGGGGE) the composition is skewed to gly residues. The interval 81 to 120 (GGAAAGGGGGGEAAAATKEEEKKKEESEEEEGDFGFDLFG) is disordered. The span at 97 to 106 (TKEEEKKKEE) shows a compositional bias: basic and acidic residues.

Belongs to the eukaryotic ribosomal protein P1/P2 family.

Plays an important role in the elongation step of protein synthesis. This chain is Large ribosomal subunit protein P3y (RPP3B), found in Arabidopsis thaliana (Mouse-ear cress).